We begin with the raw amino-acid sequence, 827 residues long: Probable beta-glucosidase H (827 aa).

Residue aspartate 223 is part of the active site. A PA14 domain is found at 387-546 (RLLTNAVMHF…DSAEMVRSAV (160 aa)). Residues asparagine 471, asparagine 594, asparagine 600, and asparagine 625 are each glycosylated (N-linked (GlcNAc...) asparagine).

Belongs to the glycosyl hydrolase 3 family.

The protein resides in the secreted. It carries out the reaction Hydrolysis of terminal, non-reducing beta-D-glucosyl residues with release of beta-D-glucose.. It participates in glycan metabolism; cellulose degradation. Functionally, beta-glucosidases are one of a number of cellulolytic enzymes involved in the degradation of cellulosic biomass. Catalyzes the last step releasing glucose from the inhibitory cellobiose. This is Probable beta-glucosidase H (bglH) from Aspergillus flavus (strain ATCC 200026 / FGSC A1120 / IAM 13836 / NRRL 3357 / JCM 12722 / SRRC 167).